Here is a 507-residue protein sequence, read N- to C-terminus: uncharacterized protein (507 aa).

Disordered regions lie at residues 91-162 (NEKT…KKLL), 174-255 (EKLQ…QQQQ), and 309-422 (KRKL…NYST). Over residues 116 to 143 (DSSESDSSESESDSSESESESESNETSE) the composition is skewed to acidic residues. Over residues 144 to 155 (NESSSSSEPESS) the composition is skewed to low complexity. The span at 174-193 (EKLQQEQQKQKEAQKPKEKP) shows a compositional bias: basic and acidic residues. Low complexity-rich tracts occupy residues 194–236 (QQQQ…QQIE), 243–255 (PQQQQQQQQQQQQ), and 313–350 (QSQLDNDGLANKNDNNSNNNNYNNSNNNDSNNNNTNKP). Positions 351–360 (LSKRQKKLLK) are enriched in basic residues. Residues 378–409 (NNKNDNSTNDSNNNNDNNNNNKNDTNDSNNDD) show a composition bias toward low complexity.

This is an uncharacterized protein from Dictyostelium discoideum (Social amoeba).